Reading from the N-terminus, the 432-residue chain is Glutamate-1-semialdehyde 2,1-aminomutase (432 aa).

Residue Lys-269 is modified to N6-(pyridoxal phosphate)lysine.

The protein belongs to the class-III pyridoxal-phosphate-dependent aminotransferase family. HemL subfamily. In terms of assembly, homodimer. The cofactor is pyridoxal 5'-phosphate.

The protein localises to the cytoplasm. The catalysed reaction is (S)-4-amino-5-oxopentanoate = 5-aminolevulinate. It functions in the pathway porphyrin-containing compound metabolism; protoporphyrin-IX biosynthesis; 5-aminolevulinate from L-glutamyl-tRNA(Glu): step 2/2. The protein operates within porphyrin-containing compound metabolism; chlorophyll biosynthesis. In Chloroherpeton thalassium (strain ATCC 35110 / GB-78), this protein is Glutamate-1-semialdehyde 2,1-aminomutase.